The primary structure comprises 227 residues: Cytochrome c oxidase subunit 2 (227 aa).

Residues 1–14 (MAYPFQLGLQDATS) are Mitochondrial intermembrane-facing. Residues 15-45 (PIMEELTNFHDHTLMIVFLISSLVLYIISLM) form a helical membrane-spanning segment. The Mitochondrial matrix portion of the chain corresponds to 46 to 59 (LTTKLTHTSTMDAQ). The helical transmembrane segment at 60–87 (EVETIWTILPAVILILIALPSLRILYMM) threads the bilayer. Residues 88-227 (DEINNPALTV…YFENWSASMI (140 aa)) lie on the Mitochondrial intermembrane side of the membrane. Cu cation contacts are provided by H161, C196, E198, C200, H204, and M207. E198 contacts Mg(2+). Y218 carries the phosphotyrosine modification.

Belongs to the cytochrome c oxidase subunit 2 family. Component of the cytochrome c oxidase (complex IV, CIV), a multisubunit enzyme composed of 14 subunits. The complex is composed of a catalytic core of 3 subunits MT-CO1, MT-CO2 and MT-CO3, encoded in the mitochondrial DNA, and 11 supernumerary subunits COX4I, COX5A, COX5B, COX6A, COX6B, COX6C, COX7A, COX7B, COX7C, COX8 and NDUFA4, which are encoded in the nuclear genome. The complex exists as a monomer or a dimer and forms supercomplexes (SCs) in the inner mitochondrial membrane with NADH-ubiquinone oxidoreductase (complex I, CI) and ubiquinol-cytochrome c oxidoreductase (cytochrome b-c1 complex, complex III, CIII), resulting in different assemblies (supercomplex SCI(1)III(2)IV(1) and megacomplex MCI(2)III(2)IV(2)). Found in a complex with TMEM177, COA6, COX18, COX20, SCO1 and SCO2. Interacts with TMEM177 in a COX20-dependent manner. Interacts with COX20. Interacts with COX16. The cofactor is Cu cation.

It localises to the mitochondrion inner membrane. The enzyme catalyses 4 Fe(II)-[cytochrome c] + O2 + 8 H(+)(in) = 4 Fe(III)-[cytochrome c] + 2 H2O + 4 H(+)(out). Its function is as follows. Component of the cytochrome c oxidase, the last enzyme in the mitochondrial electron transport chain which drives oxidative phosphorylation. The respiratory chain contains 3 multisubunit complexes succinate dehydrogenase (complex II, CII), ubiquinol-cytochrome c oxidoreductase (cytochrome b-c1 complex, complex III, CIII) and cytochrome c oxidase (complex IV, CIV), that cooperate to transfer electrons derived from NADH and succinate to molecular oxygen, creating an electrochemical gradient over the inner membrane that drives transmembrane transport and the ATP synthase. Cytochrome c oxidase is the component of the respiratory chain that catalyzes the reduction of oxygen to water. Electrons originating from reduced cytochrome c in the intermembrane space (IMS) are transferred via the dinuclear copper A center (CU(A)) of subunit 2 and heme A of subunit 1 to the active site in subunit 1, a binuclear center (BNC) formed by heme A3 and copper B (CU(B)). The BNC reduces molecular oxygen to 2 water molecules using 4 electrons from cytochrome c in the IMS and 4 protons from the mitochondrial matrix. The polypeptide is Cytochrome c oxidase subunit 2 (MT-CO2) (Oenomys hypoxanthus (Rufous-nosed rat)).